An 846-amino-acid polypeptide reads, in one-letter code: Neurotactin (846 aa).

A disordered region spans residues 1-222 (MGELEEKETP…EDASDAPPKR (222 aa)). Residues 1–324 (MGELEEKETP…LRGYKCSVDD (324 aa)) are Cytoplasmic-facing. Positions 11-20 (PTETTAAQQE) are enriched in low complexity. Basic and acidic residues predominate over residues 23 to 42 (EEPKETDKMLDKKEDAKEKT). Residue T28 is modified to Phosphothreonine; by PKC. At T42 the chain carries Phosphothreonine. A Phosphoserine modification is found at S44. Residue T47 is modified to Phosphothreonine. Phosphoserine occurs at positions 48 and 52. Over residues 63–74 (AEKKIDDAELAK) the composition is skewed to basic and acidic residues. The residue at position 75 (S75) is a Phosphoserine; by PKC. S77 is subject to Phosphoserine. Composition is skewed to basic and acidic residues over residues 95–111 (DSAD…EVKP), 141–155 (LLEK…KEAN), 163–178 (GKDE…ERLR), and 185–205 (PSAE…KSEA). Position 103 is a phosphoserine; by PKC (S103). The residue at position 169 (S169) is a Phosphoserine; by PKC. Residues S186 and S203 each carry the phosphoserine modification. Phosphothreonine is present on T206. S256 is subject to Phosphoserine. Phosphothreonine is present on T259. S263 carries the post-translational modification Phosphoserine. T269 is subject to Phosphothreonine. A helical; Signal-anchor for type II membrane protein transmembrane segment spans residues 325–346 (ALIVFGILLFVLLLGVIGYVLT). The Extracellular portion of the chain corresponds to 347–846 (HETLTSPPLR…DIVPRYARVD (500 aa)). Residues N410, N417, and N428 are each glycosylated (N-linked (GlcNAc...) asparagine). Intrachain disulfides connect C422/C437 and C600/C605. N636, N691, and N720 each carry an N-linked (GlcNAc...) asparagine glycan. C738 and C830 are oxidised to a cystine.

The protein in the C-terminal section; belongs to the type-B carboxylesterase/lipase family. In terms of tissue distribution, late in embryogenesis, expression is restricted to cells of the peripheral and central nervous system undergoing proliferation and differentiation. Also expressed in larval CNS, mesoderm and imaginal disks.

Its subcellular location is the membrane. Its function is as follows. May mediate or modulate cell adhesion between embryonic cells during development. This chain is Neurotactin (Nrt), found in Drosophila melanogaster (Fruit fly).